Consider the following 195-residue polypeptide: NADH-quinone oxidoreductase subunit B (195 aa).

Residues Cys74, Cys75, Cys139, and Cys169 each contribute to the [4Fe-4S] cluster site.

This sequence belongs to the complex I 20 kDa subunit family. As to quaternary structure, NDH-1 is composed of 14 different subunits. Subunits NuoB, C, D, E, F, and G constitute the peripheral sector of the complex. [4Fe-4S] cluster is required as a cofactor.

It is found in the cell inner membrane. It catalyses the reaction a quinone + NADH + 5 H(+)(in) = a quinol + NAD(+) + 4 H(+)(out). Functionally, NDH-1 shuttles electrons from NADH, via FMN and iron-sulfur (Fe-S) centers, to quinones in the respiratory chain. The immediate electron acceptor for the enzyme in this species is believed to be ubiquinone. Couples the redox reaction to proton translocation (for every two electrons transferred, four hydrogen ions are translocated across the cytoplasmic membrane), and thus conserves the redox energy in a proton gradient. The polypeptide is NADH-quinone oxidoreductase subunit B (Methylorubrum extorquens (strain PA1) (Methylobacterium extorquens)).